Here is a 77-residue protein sequence, read N- to C-terminus: MSLEDDVKAIIVDQLGVSPEDVKVDSSFIEDLNADSLDLTELIMTLEEKFAFEISEDDAEQLRTVGDVIKYIQERQN.

The Carrier domain maps to 1–76 (MSLEDDVKAI…DVIKYIQERQ (76 aa)). S36 is subject to O-(pantetheine 4'-phosphoryl)serine.

The protein belongs to the acyl carrier protein (ACP) family. Post-translationally, 4'-phosphopantetheine is transferred from CoA to a specific serine of apo-ACP by AcpS. This modification is essential for activity because fatty acids are bound in thioester linkage to the sulfhydryl of the prosthetic group.

The protein localises to the cytoplasm. The protein operates within lipid metabolism; fatty acid biosynthesis. Functionally, carrier of the growing fatty acid chain in fatty acid biosynthesis. This chain is Acyl carrier protein, found in Chlamydia trachomatis serovar A (strain ATCC VR-571B / DSM 19440 / HAR-13).